A 445-amino-acid chain; its full sequence is Pre-B-cell leukemia transcription factor 2 (445 aa).

The interval 13 to 44 (VGIPGLPIHGGPQTLTPHPMHEPPTDNGEPRK) is disordered. Residues 31–44 (PMHEPPTDNGEPRK) show a composition bias toward basic and acidic residues. One can recognise a PBC domain in the interval 42-236 (PRKQDIGDIL…VMILRSRFLD (195 aa)). The interval 49–128 (DILQQIMTIT…EGVAGPEKGG (80 aa)) is PBC-A. A PBC-B region spans residues 131-236 (AAAAAAAAAS…VMILRSRFLD (106 aa)). The homeobox; TALE-type DNA-binding region spans 237–299 (ARRKRRNFSK…NKRIRYKKNI (63 aa)). Polar residues predominate over residues 319 to 332 (QGGHSGANSPTTPT). The tract at residues 319–338 (QGGHSGANSPTTPTSAGSGG) is disordered.

This sequence belongs to the TALE/PBX homeobox family.

It localises to the nucleus. Its function is as follows. Transcriptional activator that binds the sequence 5'-ATCAATCAA-3'. This chain is Pre-B-cell leukemia transcription factor 2 (pbx2), found in Xenopus laevis (African clawed frog).